A 157-amino-acid polypeptide reads, in one-letter code: 2-C-methyl-D-erythritol 2,4-cyclodiphosphate synthase (157 aa).

A divalent metal cation contacts are provided by Asp9 and His11. 4-CDP-2-C-methyl-D-erythritol 2-phosphate contacts are provided by residues 9-11 (DVH) and 35-36 (HS). A divalent metal cation is bound at residue His43. 4-CDP-2-C-methyl-D-erythritol 2-phosphate-binding positions include 57–59 (DIG), 62–66 (FPDTD), 101–107 (AQKPKMA), 133–136 (TTTE), Phe140, and Arg143.

This sequence belongs to the IspF family. In terms of assembly, homotrimer. Requires a divalent metal cation as cofactor.

It carries out the reaction 4-CDP-2-C-methyl-D-erythritol 2-phosphate = 2-C-methyl-D-erythritol 2,4-cyclic diphosphate + CMP. Its pathway is isoprenoid biosynthesis; isopentenyl diphosphate biosynthesis via DXP pathway; isopentenyl diphosphate from 1-deoxy-D-xylulose 5-phosphate: step 4/6. Functionally, involved in the biosynthesis of isopentenyl diphosphate (IPP) and dimethylallyl diphosphate (DMAPP), two major building blocks of isoprenoid compounds. Catalyzes the conversion of 4-diphosphocytidyl-2-C-methyl-D-erythritol 2-phosphate (CDP-ME2P) to 2-C-methyl-D-erythritol 2,4-cyclodiphosphate (ME-CPP) with a corresponding release of cytidine 5-monophosphate (CMP). In Halalkalibacterium halodurans (strain ATCC BAA-125 / DSM 18197 / FERM 7344 / JCM 9153 / C-125) (Bacillus halodurans), this protein is 2-C-methyl-D-erythritol 2,4-cyclodiphosphate synthase.